The sequence spans 591 residues: V-type ATP synthase alpha chain (591 aa).

242 to 249 (GPFGAGKT) lines the ATP pocket.

This sequence belongs to the ATPase alpha/beta chains family.

It catalyses the reaction ATP + H2O + 4 H(+)(in) = ADP + phosphate + 5 H(+)(out). In terms of biological role, produces ATP from ADP in the presence of a proton gradient across the membrane. The V-type alpha chain is a catalytic subunit. In Chlamydia pneumoniae (Chlamydophila pneumoniae), this protein is V-type ATP synthase alpha chain (atpA).